Here is a 704-residue protein sequence, read N- to C-terminus: MSPSAIAEKKQVDNIQEIKDKNQEPAHHEYEHLTNVGVVKQKPIDHRLKDNIKTHYSPHLDGLQEYKRQYQESIENPEKFFSEKARSFMNWFRDFDRVFVPDVDNPTKPSFENNAWFLNGQLNTCYNCVDRHALKTPNKTAIIYEADEPGEGYSMSYKELLEKVCQVAQILKYSMNVKKGDTVAVYMPMIPEALITLLAISRIGAIHSVVFAGFSSNSLRDRINDAGSRVVITADESNRGGKIIETKRIVDDALRETPQVEHVLVYRRTNNPQVNFQAPRDLDWETERKKYKTYFPCEPVDSEHPLFLLYTSGSTGTPKGVQHSTAGYLLGALLTMRYTFDVHQEDVFFTAGDIGWITGHTYCVYGPLLYGCTTLVFEGTPAYPNFSRYWEIIDKHQVTQFYVAPTALRLLKRAGDSFIDGFSLKSLRCLGSVGEPIAAEVWEWYSDKIGKNEIPIVDTYWQTESGSHLVTPLAGGVTPMKPGSASLPFFGIETVILDPTTGEEINDSHAEGVLAIKRPWPSFARTIWKNHDRFLDTYLNPYKGYYFTGDGAARDKDGYIWILGRVDDVVNVSGHRLSTAEIEAAIIEDRMVAECAVVGFNDDLTGQAVAAFVVLKDKSTWASASEEELQDIKKHLILTVRKDIGPFAAPKLIVLVDDLPKTRSGKIMRRILRKILAGESDQLGDVSTLSNPGVVKHLIDSVKL.

CoA contacts are provided by residues 239–242 (RGGK) and T358. Residues 434–436 (GEP), 458–463 (DTYWQT), D550, and R565 each bind ATP. S573 contacts CoA. R576 serves as a coordination point for ATP. R641 contributes to the CoA binding site. The Microbody targeting signal signature appears at 702–704 (VKL).

Belongs to the ATP-dependent AMP-binding enzyme family.

The protein resides in the microsome. It localises to the endoplasmic reticulum. It catalyses the reaction acetate + ATP + CoA = acetyl-CoA + AMP + diphosphate. The protein is Acetyl-coenzyme A synthetase 1 (ACS1) of Candida glabrata (strain ATCC 2001 / BCRC 20586 / JCM 3761 / NBRC 0622 / NRRL Y-65 / CBS 138) (Yeast).